The following is a 180-amino-acid chain: Ribulose bisphosphate carboxylase small subunit, chloroplastic (180 aa).

The transit peptide at M1 to R56 directs the protein to the chloroplast.

This sequence belongs to the RuBisCO small chain family. As to quaternary structure, heterohexadecamer of 8 large and 8 small subunits.

The protein resides in the plastid. The protein localises to the chloroplast. Its function is as follows. RuBisCO catalyzes two reactions: the carboxylation of D-ribulose 1,5-bisphosphate, the primary event in carbon dioxide fixation, as well as the oxidative fragmentation of the pentose substrate. Both reactions occur simultaneously and in competition at the same active site. Although the small subunit is not catalytic it is essential for maximal activity. The polypeptide is Ribulose bisphosphate carboxylase small subunit, chloroplastic (Stellaria longipes (Longstalk starwort)).